The primary structure comprises 122 residues: MSKLSRKQQTQKRHRRLRRHLTGTSDRPRLAVFRSNNHIYAQVIDDDAQSTLCSASTVDKELRAGLEANGGSCDASVAVGELVAKRAIAKGIQSVVFDRGGNLYHGRIKALADAAREAGLQF.

The span at 1 to 21 (MSKLSRKQQTQKRHRRLRRHL) shows a compositional bias: basic residues. Positions 1–26 (MSKLSRKQQTQKRHRRLRRHLTGTSD) are disordered.

The protein belongs to the universal ribosomal protein uL18 family. In terms of assembly, part of the 50S ribosomal subunit; part of the 5S rRNA/L5/L18/L25 subcomplex. Contacts the 5S and 23S rRNAs.

In terms of biological role, this is one of the proteins that bind and probably mediate the attachment of the 5S RNA into the large ribosomal subunit, where it forms part of the central protuberance. The protein is Large ribosomal subunit protein uL18 of Parasynechococcus marenigrum (strain WH8102).